Reading from the N-terminus, the 181-residue chain is Large ribosomal subunit protein bL19 (181 aa).

Residues 162 to 173 (EKKAAAEAEAAK) show a composition bias toward basic and acidic residues. The segment at 162–181 (EKKAAAEAEAAKAAEATPAE) is disordered.

It belongs to the bacterial ribosomal protein bL19 family.

Functionally, this protein is located at the 30S-50S ribosomal subunit interface and may play a role in the structure and function of the aminoacyl-tRNA binding site. This is Large ribosomal subunit protein bL19 from Mesorhizobium japonicum (strain LMG 29417 / CECT 9101 / MAFF 303099) (Mesorhizobium loti (strain MAFF 303099)).